The chain runs to 852 residues: Envelope glycoprotein gp160 (852 aa).

An N-terminal signal peptide occupies residues 1-32 (MRVKGIKKNYQHLWRWGGMMLLGILMICSATD). Over 33 to 680 (KLWVTVYYGV…ITNWLWYIKI (648 aa)) the chain is Extracellular. Residue asparagine 49 is glycosylated (N-linked (GlcNAc...) asparagine; by host). Cysteine 54 and cysteine 74 are disulfide-bonded. N-linked (GlcNAc...) asparagine; by host glycans are attached at residues asparagine 88, asparagine 135, asparagine 138, asparagine 154, asparagine 158, asparagine 197, asparagine 234, asparagine 241, asparagine 262, asparagine 276, asparagine 289, asparagine 295, asparagine 301, asparagine 331, asparagine 354, and asparagine 360. 5 cysteine pairs are disulfide-bonded: cysteine 119–cysteine 205, cysteine 126–cysteine 196, cysteine 131–cysteine 155, cysteine 218–cysteine 247, and cysteine 228–cysteine 239. The interval 131–154 (CHDFNATNATSNSGKMMEGGEMKN) is V1. The V2 stretch occupies residues 155-196 (CSFNITTSIRDKMQKEYALFYKLDIVPIDNDKTNTRYRLISC). Residues 296-329 (CTRPNNNTRKRITMGPGRVYYTTGQIIGDIRRAH) are V3. Cysteine 296 and cysteine 330 are disulfide-bonded. The segment at 362 to 372 (SSGGDPEIVMH) is CD4-binding loop. 2 cysteine pairs are disulfide-bonded: cysteine 376-cysteine 439 and cysteine 383-cysteine 412. A V4 region spans residues 383–412 (CNTTQLFNSTWYRNTTGNITEGNSPITLPC). 6 N-linked (GlcNAc...) asparagine; by host glycosylation sites follow: asparagine 384, asparagine 390, asparagine 396, asparagine 400, asparagine 442, and asparagine 456. V5 regions lie at residues 454-467 (NNNETTDTEIFRPG) and 457-467 (ETTDTEIFRPG). A fusion peptide region spans residues 508–528 (AVGLGALFLGFLGAAGSTMGA). Residues 570 to 588 (KQLQARVLAVERYLKDQQL) form an immunosuppression region. Cysteines 594 and 600 form a disulfide. Asparagine 607, asparagine 612, asparagine 621, asparagine 633, and asparagine 670 each carry an N-linked (GlcNAc...) asparagine; by host glycan. A coiled-coil region spans residues 629-663 (REIDNYTNLIYSLIEDSQIQQEKNEKELLELDKWA). The segment at 658-679 (ELDKWASLWNWFNITNWLWYIK) is MPER; binding to GalCer. A helical transmembrane segment spans residues 681 to 701 (FIMIVGGLIGLRIVFAVLSIV). Over 702-852 (NRVRQGYSPL…IRQGLERALQ (151 aa)) the chain is Cytoplasmic. Positions 708 to 711 (YSPL) match the YXXL motif; contains endocytosis signal motif. The interval 715 to 741 (TRLPGRRGPDRPEGIEEEGGERDRDRS) is disordered.

The protein belongs to the HIV-1 env protein family. In terms of assembly, the mature envelope protein (Env) consists of a homotrimer of non-covalently associated gp120-gp41 heterodimers. The resulting complex protrudes from the virus surface as a spike. There seems to be as few as 10 spikes on the average virion. Interacts with host CD4, CCR5 and CXCR4. Gp120 also interacts with the C-type lectins CD209/DC-SIGN and CLEC4M/DC-SIGNR (collectively referred to as DC-SIGN(R)). Gp120 and gp41 interact with GalCer. Gp120 interacts with host ITGA4/ITGB7 complex; on CD4+ T-cells, this interaction results in rapid activation of integrin ITGAL/LFA-1, which facilitates efficient cell-to-cell spreading of HIV-1. Gp120 interacts with cell-associated heparan sulfate; this interaction increases virus infectivity on permissive cells and may be involved in infection of CD4- cells. The mature envelope protein (Env) consists of a homotrimer of non-covalently associated gp120-gp41 heterodimers. The resulting complex protrudes from the virus surface as a spike. There seems to be as few as 10 spikes on the average virion. Highly glycosylated by host. The high number of glycan on the protein is reffered to as 'glycan shield' because it contributes to hide protein sequence from adaptive immune system. Post-translationally, palmitoylation of the transmembrane protein and of Env polyprotein (prior to its proteolytic cleavage) is essential for their association with host cell membrane lipid rafts. Palmitoylation is therefore required for envelope trafficking to classical lipid rafts, but not for viral replication. In terms of processing, specific enzymatic cleavages in vivo yield mature proteins. Envelope glycoproteins are synthesized as an inactive precursor that is heavily N-glycosylated and processed likely by host cell furin in the Golgi to yield the mature SU and TM proteins. The cleavage site between SU and TM requires the minimal sequence [KR]-X-[KR]-R. About 2 of the 9 disulfide bonds of gp41 are reduced by P4HB/PDI, following binding to CD4 receptor.

Its subcellular location is the virion membrane. It localises to the host cell membrane. The protein resides in the host endosome membrane. Functionally, oligomerizes in the host endoplasmic reticulum into predominantly trimers. In a second time, gp160 transits in the host Golgi, where glycosylation is completed. The precursor is then proteolytically cleaved in the trans-Golgi and thereby activated by cellular furin or furin-like proteases to produce gp120 and gp41. Its function is as follows. Attaches the virus to the host lymphoid cell by binding to the primary receptor CD4. This interaction induces a structural rearrangement creating a high affinity binding site for a chemokine coreceptor like CXCR4 and/or CCR5. Acts as a ligand for CD209/DC-SIGN and CLEC4M/DC-SIGNR, which are respectively found on dendritic cells (DCs), and on endothelial cells of liver sinusoids and lymph node sinuses. These interactions allow capture of viral particles at mucosal surfaces by these cells and subsequent transmission to permissive cells. HIV subverts the migration properties of dendritic cells to gain access to CD4+ T-cells in lymph nodes. Virus transmission to permissive T-cells occurs either in trans (without DCs infection, through viral capture and transmission), or in cis (following DCs productive infection, through the usual CD4-gp120 interaction), thereby inducing a robust infection. In trans infection, bound virions remain infectious over days and it is proposed that they are not degraded, but protected in non-lysosomal acidic organelles within the DCs close to the cell membrane thus contributing to the viral infectious potential during DCs' migration from the periphery to the lymphoid tissues. On arrival at lymphoid tissues, intact virions recycle back to DCs' cell surface allowing virus transmission to CD4+ T-cells. Acts as a class I viral fusion protein. Under the current model, the protein has at least 3 conformational states: pre-fusion native state, pre-hairpin intermediate state, and post-fusion hairpin state. During fusion of viral and target intracellular membranes, the coiled coil regions (heptad repeats) assume a trimer-of-hairpins structure, positioning the fusion peptide in close proximity to the C-terminal region of the ectodomain. The formation of this structure appears to drive apposition and subsequent fusion of viral and target cell membranes. Complete fusion occurs in host cell endosomes and is dynamin-dependent, however some lipid transfer might occur at the plasma membrane. The virus undergoes clathrin-dependent internalization long before endosomal fusion, thus minimizing the surface exposure of conserved viral epitopes during fusion and reducing the efficacy of inhibitors targeting these epitopes. Membranes fusion leads to delivery of the nucleocapsid into the cytoplasm. The polypeptide is Envelope glycoprotein gp160 (Human immunodeficiency virus type 1 group M subtype B (isolate BRVA) (HIV-1)).